Reading from the N-terminus, the 284-residue chain is 2-dehydro-3-deoxyphosphooctonate aldolase (284 aa).

Belongs to the KdsA family.

The protein resides in the cytoplasm. It catalyses the reaction D-arabinose 5-phosphate + phosphoenolpyruvate + H2O = 3-deoxy-alpha-D-manno-2-octulosonate-8-phosphate + phosphate. Its pathway is carbohydrate biosynthesis; 3-deoxy-D-manno-octulosonate biosynthesis; 3-deoxy-D-manno-octulosonate from D-ribulose 5-phosphate: step 2/3. It functions in the pathway bacterial outer membrane biogenesis; lipopolysaccharide biosynthesis. The protein is 2-dehydro-3-deoxyphosphooctonate aldolase (kdsA) of Haemophilus influenzae (strain ATCC 51907 / DSM 11121 / KW20 / Rd).